A 677-amino-acid polypeptide reads, in one-letter code: UvrABC system protein B (677 aa).

A Helicase ATP-binding domain is found at 26-414; the sequence is DNLDAGLAHQ…SGNEVVEQVV (389 aa). 39–46 is an ATP binding site; the sequence is GVTGSGKT. The short motif at 92–115 is the Beta-hairpin element; that stretch reads YYDYYQPEAYVPTTDTFIEKDASI. One can recognise a Helicase C-terminal domain in the interval 432–598; sequence QVDDLMSEIR…GLNKDITDVM (167 aa). A UVR domain is found at 637–672; sequence MKEIDAKEKEMYKAAQNLEFEQAGKLRDEVAELREQ.

This sequence belongs to the UvrB family. In terms of assembly, forms a heterotetramer with UvrA during the search for lesions. Interacts with UvrC in an incision complex.

It localises to the cytoplasm. Its function is as follows. The UvrABC repair system catalyzes the recognition and processing of DNA lesions. A damage recognition complex composed of 2 UvrA and 2 UvrB subunits scans DNA for abnormalities. Upon binding of the UvrA(2)B(2) complex to a putative damaged site, the DNA wraps around one UvrB monomer. DNA wrap is dependent on ATP binding by UvrB and probably causes local melting of the DNA helix, facilitating insertion of UvrB beta-hairpin between the DNA strands. Then UvrB probes one DNA strand for the presence of a lesion. If a lesion is found the UvrA subunits dissociate and the UvrB-DNA preincision complex is formed. This complex is subsequently bound by UvrC and the second UvrB is released. If no lesion is found, the DNA wraps around the other UvrB subunit that will check the other stand for damage. This Idiomarina loihiensis (strain ATCC BAA-735 / DSM 15497 / L2-TR) protein is UvrABC system protein B.